Reading from the N-terminus, the 356-residue chain is C-C chemokine receptor 1-like protein 1 (356 aa).

At 1-32 (MEIPAVTEPSYNTVAKNDFMSGFLCFSINVRA) the chain is on the extracellular side. The chain crosses the membrane as a helical span at residues 33–60 (FGITVLTPLYSLVFIIGVIGHVLVVLVL). Residues 61–67 (IQHKRLR) are Cytoplasmic-facing. A helical transmembrane segment spans residues 68-92 (NMTSIYLFNLAISDLVFLSTLPFWV). Over 93-108 (DYIMKGDWIFGNAMCK) the chain is Extracellular. A disulfide bond links cysteine 107 and cysteine 184. A helical membrane pass occupies residues 109–130 (FVSGFYYLGLYSDMFFITLLTI). Over 131-147 (DRYLAVVHVVFALRART) the chain is Cytoplasmic. The helical transmembrane segment at 148 to 172 (VTFGIISSIITWVLAALVSIPCLYV) threads the bilayer. Topologically, residues 173-198 (FKSQMEFTYHTCRAILPRKSLIRFLR) are extracellular. The chain crosses the membrane as a helical span at residues 199–224 (FQALTMNILGLILPLLAMIICYTRII). The Cytoplasmic segment spans residues 225 to 240 (NVLHRRPNKKKAKVMR). Residues 241-265 (LIFVITLLFFLLLAPYYLAAFVSAF) form a helical membrane-spanning segment. The Extracellular portion of the chain corresponds to 266–282 (EDVLFTPSCLRSQQVDL). Residues 283–306 (SLMITEALAYTHCCVNPVIYVFVG) form a helical membrane-spanning segment. Topologically, residues 307-356 (KRFRKYLWQLFRRHTAITLPQWLPFLSVDRAQRASATPPSTVEIETSADL) are cytoplasmic.

The protein belongs to the G-protein coupled receptor 1 family. As to expression, detected in the spleen, liver and leukocytes.

It localises to the cell membrane. Its function is as follows. Probable receptor for a C-C type chemokine. This is C-C chemokine receptor 1-like protein 1 (Ccr1l1) from Mus musculus (Mouse).